The following is a 353-amino-acid chain: Protein disulfide isomerase CRELD2 (353 aa).

Positions 1-24 (MRLPRRAALGLLPLLLLLPPAPEA) are cleaved as a signal peptide. The CXXC motif lies at 31–34 (CHRC). Intrachain disulfides connect C31-C34, C140-C154, C148-C166, and C168-C177. Residues 136-178 (DCLACQGGSQRPCSGNGHCSGDGSRQGDGSCRCHMGYQGPLCT) enclose the EGF-like 1 domain. An FU 1 repeat occupies 193–240 (HSICTACDESCKTCSGLTNRDCGECEVGWVLDEGACVDVDECAAEPPP). An N-linked (GlcNAc...) asparagine glycan is attached at N251. An FU 2 repeat occupies 253–302 (SYTCEECDSSCVGCTGEGPGNCKECISGYAREHGQCADVDECSLAEKTCV). Residues 263–266 (CVGC) carry the CXXC motif. Disulfide bonds link C263/C266, C294/C308, C301/C317, and C319/C330. The EGF-like 2; calcium-binding domain occupies 290 to 331 (DVDECSLAEKTCVRKNENCYNTPGSYVCVCPDGFEETEDACV). The segment at 332-353 (PPAEAEATEGESPTQLPSREDL) is disordered. Over residues 342 to 353 (ESPTQLPSREDL) the composition is skewed to polar residues.

The protein belongs to the CRELD family. As to quaternary structure, interacts with CHRNA4. Component of a complex containing at least CRELD2, MANF, MATN3 and PDIA4. In terms of tissue distribution, ubiquitously expressed. Highly expressed in skeletal muscle, heart, liver, kidney and placenta.

The protein resides in the endoplasmic reticulum. It catalyses the reaction Catalyzes the rearrangement of -S-S- bonds in proteins.. Protein disulfide isomerase. Might play a role in the unfolded protein response. May regulate transport of alpha4-beta2 neuronal acetylcholine receptor. This Homo sapiens (Human) protein is Protein disulfide isomerase CRELD2 (CRELD2).